A 510-amino-acid chain; its full sequence is Beta-glucosidase 40 (510 aa).

Residues 1–29 form the signal peptide; it reads MAHRRLIMTMTKMMMMVTMMMMMDKTCIC. Residues glutamine 51, histidine 152, and 197–198 contribute to the a beta-D-glucoside site; that span reads NE. Glutamate 198 acts as the Proton donor in catalysis. Cysteine 217 and cysteine 225 are disulfide-bonded. N-linked (GlcNAc...) asparagine glycans are attached at residues asparagine 229 and asparagine 278. Residue tyrosine 341 participates in a beta-D-glucoside binding. An N-linked (GlcNAc...) asparagine glycan is attached at asparagine 349. A beta-D-glucoside-binding positions include glutamate 414, tryptophan 464, 471 to 472, and phenylalanine 480; that span reads EW. Glutamate 414 functions as the Nucleophile in the catalytic mechanism. A glycan (N-linked (GlcNAc...) asparagine) is linked at asparagine 507.

The protein belongs to the glycosyl hydrolase 1 family.

It catalyses the reaction Hydrolysis of terminal, non-reducing beta-D-glucosyl residues with release of beta-D-glucose.. This Arabidopsis thaliana (Mouse-ear cress) protein is Beta-glucosidase 40.